An 86-amino-acid polypeptide reads, in one-letter code: Hepcidin-1 (86 aa).

The first 22 residues, 1-22 (MKAFSVAVVLVIACMFILESTA), serve as a signal peptide directing secretion. A propeptide spanning residues 23-59 (VPFSEVRTEEVGSFDSPVGEHQQPGGESMHLPEPFRF) is cleaved from the precursor. Intrachain disulfides connect Cys-68/Cys-84, Cys-71/Cys-74, Cys-72/Cys-80, and Cys-75/Cys-83.

Belongs to the hepcidin family.

It is found in the secreted. Functionally, seems to act as a signaling molecule involved in the maintenance of iron homeostasis. Seems to be required in conjunction with HFE to regulate both intestinal iron absorption and iron storage in macrophages. May also have antimicrobial activity. In Salmo salar (Atlantic salmon), this protein is Hepcidin-1 (hamp1).